The sequence spans 1240 residues: Neurofascin (1240 aa).

An N-terminal signal peptide occupies residues 1–24 (MARQQAPPWVHIALILFLLSLGGA). Topologically, residues 25 to 1110 (IEIPMDPSIQ…NQADIATQGW (1086 aa)) are extracellular. Ig-like C2-type domains are found at residues 41–137 (PTIT…LQVS), 143–230 (PKEN…NPFT), 244–332 (PSFM…ISVR), 337–424 (PYWL…AFVS), 430–517 (PRML…VRLE), and 521–603 (PTRI…QDLA). Disulfide bonds link C63–C118, C162–C213, C268–C316, and C358–C408. N-linked (GlcNAc...) asparagine glycosylation occurs at N305. N409 and N446 each carry an N-linked (GlcNAc...) asparagine glycan. Intrachain disulfides connect C452/C501 and C543/C592. Y481 carries the phosphotyrosine modification. The N-linked (GlcNAc...) asparagine glycan is linked to N483. S485 bears the Phosphoserine mark. Fibronectin type-III domains are found at residues 630 to 725 (RPRD…TSGA), 727 to 823 (PESN…SGED), 827 to 923 (APRR…PNEA), and 1007 to 1099 (APDE…TAYT). The segment at 710-740 (SSHPSLPSERYRTSGAPPESNPSDVKGEGTR) is disordered. Residues N752, N778, N866, and N881 are each glycosylated (N-linked (GlcNAc...) asparagine). The interval 902–942 (ARTQVGSGEAATEESPAPPNEATPTAAPPTLPPTTVGTTGL) is disordered. Over residues 907 to 916 (GSGEAATEES) the composition is skewed to low complexity. The span at 917–933 (PAPPNEATPTAAPPTLP) shows a compositional bias: pro residues. A helical transmembrane segment spans residues 1111–1131 (FIGLMCAIALLVLILLIVCFI). Over 1132-1240 (KRSRGGKYPV…SPVNAIYSLA (109 aa)) the chain is Cytoplasmic. The disordered stretch occupies residues 1141-1240 (VREKKDVPLG…SPVNAIYSLA (100 aa)). A compositionally biased stretch (acidic residues) spans 1154–1165 (PKEEDGSFDYSD). Phosphoserine occurs at positions 1160, 1174, 1187, 1190, 1226, 1227, and 1231. The segment covering 1171–1184 (LQGSQTSLDGTIKQ) has biased composition (polar residues).

The protein belongs to the immunoglobulin superfamily. L1/neurofascin/NgCAM family. As to quaternary structure, horseshoe-shaped homodimer. Probable constituent of a NFASC/NRCAM/ankyrin-G complex. Associates with the sodium channel beta-1 (SCN1B) and beta-3 (SCN3B) subunits. Interacts with GLDN/gliomedin. Interacts with MYOC.

The protein resides in the cell membrane. Cell adhesion, ankyrin-binding protein which may be involved in neurite extension, axonal guidance, synaptogenesis, myelination and neuron-glial cell interactions. The protein is Neurofascin (Nfasc) of Mus musculus (Mouse).